Reading from the N-terminus, the 484-residue chain is tRNA-2-methylthio-N(6)-dimethylallyladenosine synthase (484 aa).

Residues 36–153 (GKLYIKTHGC…LPELIRARRE (118 aa)) form the MTTase N-terminal domain. [4Fe-4S] cluster-binding residues include cysteine 45, cysteine 82, cysteine 116, cysteine 190, cysteine 194, and cysteine 197. In terms of domain architecture, Radical SAM core spans 176–415 (RAEGPSAFVS…HISAHAASIS (240 aa)). Residues 416-479 (QSMVGSVQRV…SNSLRGRIQL (64 aa)) enclose the TRAM domain. The tract at residues 428 to 450 (EGPSRRDPNELTGKSENMRPVNF) is disordered.

It belongs to the methylthiotransferase family. MiaB subfamily. Monomer. The cofactor is [4Fe-4S] cluster.

Its subcellular location is the cytoplasm. The enzyme catalyses N(6)-dimethylallyladenosine(37) in tRNA + (sulfur carrier)-SH + AH2 + 2 S-adenosyl-L-methionine = 2-methylsulfanyl-N(6)-dimethylallyladenosine(37) in tRNA + (sulfur carrier)-H + 5'-deoxyadenosine + L-methionine + A + S-adenosyl-L-homocysteine + 2 H(+). Catalyzes the methylthiolation of N6-(dimethylallyl)adenosine (i(6)A), leading to the formation of 2-methylthio-N6-(dimethylallyl)adenosine (ms(2)i(6)A) at position 37 in tRNAs that read codons beginning with uridine. This chain is tRNA-2-methylthio-N(6)-dimethylallyladenosine synthase, found in Xanthomonas oryzae pv. oryzae (strain MAFF 311018).